We begin with the raw amino-acid sequence, 732 residues long: Sesterbrasiliatriene synthase PbSS (732 aa).

A terpene cyclase region spans residues Met-1–Thr-342. 2 residues coordinate Mg(2+): Asp-105 and Asp-109. Substrate contacts are provided by residues Asp-105, Asp-109, Arg-193 to Glu-196, Phe-242 to Phe-246, and Arg-334 to Tyr-335. Positions Asp-105–Asp-109 match the DDXXD 1 motif. The NSE/DTE motif lies at Asp-238–Phe-246. Residues Thr-343 to Leu-732 are prenyltransferase. Disordered stretches follow at residues Lys-371 to Ser-390 and Ala-398 to Asn-420. Positions Asn-411–Asn-420 are enriched in basic and acidic residues. Residues Lys-453, Arg-456, and His-485 each contribute to the isopentenyl diphosphate site. Mg(2+)-binding residues include Asp-492 and Asp-496. The DDXXD 2 signature appears at Asp-492–Asp-496. Dimethylallyl diphosphate is bound at residue Arg-501. Position 502 (Arg-502) interacts with isopentenyl diphosphate. Dimethylallyl diphosphate contacts are provided by Lys-579, Thr-580, Gln-615, Asn-622, Lys-632, and Lys-642.

This sequence in the N-terminal section; belongs to the terpene synthase family. The protein in the C-terminal section; belongs to the FPP/GGPP synthase family. In terms of assembly, hexamer. Requires Mg(2+) as cofactor.

It carries out the reaction isopentenyl diphosphate + (2E,6E)-farnesyl diphosphate = (2E,6E,10E)-geranylgeranyl diphosphate + diphosphate. It catalyses the reaction isopentenyl diphosphate + (2E,6E,10E)-geranylgeranyl diphosphate = (2E,6E,10E,14E)-geranylfarnesyl diphosphate + diphosphate. Its pathway is secondary metabolite biosynthesis; terpenoid biosynthesis. In terms of biological role, bifunctional sesterterpene synthase that possesses both prenyl transferase and terpene cyclase activity, converting isopentenyl diphosphate and dimethylallyl diphosphate into geranylfarnesyl diphosphate (GFPP) and further converting GFPP into sesterbrasiliatriene. The protein is Sesterbrasiliatriene synthase PbSS (PbSS) of Penicillium brasilianum.